Reading from the N-terminus, the 400-residue chain is Na(+)/H(+) antiporter NhaA (400 aa).

The next 11 helical transmembrane spans lie at 9–29, 60–80, 96–116, 127–147, 155–175, 180–200, 210–230, 263–283, 294–314, 327–347, and 366–386; these read FLVS…IAMV, LILW…GLEL, VLPA…FYLF, WAIP…ILGA, IFLV…MAIF, LSLI…ALNL, LILG…ATLA, YFVL…GIGL, VILG…FVAI, WISF…SLFI, and VLIA…IASV.

The protein belongs to the NhaA Na(+)/H(+) (TC 2.A.33) antiporter family.

It localises to the cell inner membrane. The catalysed reaction is Na(+)(in) + 2 H(+)(out) = Na(+)(out) + 2 H(+)(in). Its function is as follows. Na(+)/H(+) antiporter that extrudes sodium in exchange for external protons. The sequence is that of Na(+)/H(+) antiporter NhaA from Campylobacter curvus (strain 525.92).